The following is a 384-amino-acid chain: MLASYASDPLKSRGRLYKEIPTSYRNEFERDRDRIIHTNAFRRLQYKTQVFINHEGDHYRNRLTHSLEVSTVARSVASTLNLSNDLAETIALAHDLGHTPFGHAGERALNECMREYNGFSHNAQSLKILTLLEKRYAAYNGVNLTWEVLEGIVKHNGPILGEINEYIAEYNKQNDLELSTYASAEAQIAALADDISYISHDLEDSIGAKIIDFNSLAELKYIDQHVVELKSKFKNISSSCLIYEVVRKLIHELITDLLWQTKENLNKEKITNIDEIRNLNYQIVDFTEKTNKNIKETKKFLHERVYKSNKITAISLKCTKIVQGLFKIYMDDINLLPVNWKMLIDSNETYSKARVVADYIAGMTDRFAIQEYNQLCSTSYITCF.

Residues 62 to 198 (RLTHSLEVST…AALADDISYI (137 aa)) enclose the HD domain.

The protein belongs to the dGTPase family. Type 2 subfamily.

In Rickettsia peacockii (strain Rustic), this protein is Deoxyguanosinetriphosphate triphosphohydrolase-like protein.